The chain runs to 196 residues: Cytochrome c biogenesis ATP-binding export protein CcmA (196 aa).

The 194-residue stretch at 2–195 (LSFHQLKFNI…HIKSAQILQL (194 aa)) folds into the ABC transporter domain. 34 to 41 (GANGCGKT) serves as a coordination point for ATP.

Belongs to the ABC transporter superfamily. CcmA exporter (TC 3.A.1.107) family. As to quaternary structure, the complex is composed of two ATP-binding proteins (CcmA) and two transmembrane proteins (CcmB).

It is found in the cell inner membrane. It carries out the reaction heme b(in) + ATP + H2O = heme b(out) + ADP + phosphate + H(+). Functionally, part of the ABC transporter complex CcmAB involved in the biogenesis of c-type cytochromes; once thought to export heme, this seems not to be the case, but its exact role is uncertain. Responsible for energy coupling to the transport system. The sequence is that of Cytochrome c biogenesis ATP-binding export protein CcmA from Rickettsia bellii (strain RML369-C).